A 69-amino-acid chain; its full sequence is Conotoxin SIVA (69 aa).

Positions methionine 1–serine 21 are cleaved as a signal peptide. Positions threonine 22–arginine 38 are excised as a propeptide. Position 39 is a pyrrolidone carboxylic acid (glutamine 39). Residue serine 45 is glycosylated (O-linked (HexNAc...) serine). Residues proline 55, proline 60, and proline 61 each carry the 4-hydroxyproline modification. The residue at position 68 (cysteine 68) is a Cysteine amide.

This sequence belongs to the conotoxin A superfamily. In terms of processing, contains 3 disulfide bonds. O-linked glycan consists of Hex3-HexNAc2 pentasaccharide. As to expression, expressed by the venom duct.

It is found in the secreted. Functionally, neurotoxin with probable activity on sodium channel. Induces intense repetitive firing of the frog neuromuscular junction, leading to a tetanic contracture in muscle fiber (spastic paralysis). In vivo, shows the same effect as the whole venom when injected on fish. Intraperitoneal injection into fish induces a period of rapid swimming followed by a spastic paralysis with stiff fibrillating fins. At high doses, the peptide is lethal to both fish and mice. The sequence is that of Conotoxin SIVA from Conus striatus (Striated cone).